Reading from the N-terminus, the 830-residue chain is GPI ethanolamine phosphate transferase 2 (830 aa).

A signal peptide spans 1 to 32 (MNLKQFTCLSCAQLLAILLFIFAFFPRKIVLT). The Lumenal portion of the chain corresponds to 33–321 (GISKQDPDQD…QYLETVQQID (289 aa)). Asparagine 145, asparagine 185, and asparagine 298 each carry an N-linked (GlcNAc...) asparagine glycan. Residues 322–342 (IVPTIAALFGMPIPMNSVGII) traverse the membrane as a helical segment. Residues 343–405 (IPDFLQLLPN…TKSATNYNYP (63 aa)) are Cytoplasmic-facing. The helical transmembrane segment at 406–426 (LLTLAFVGFLIITIIAIYVLL) threads the bilayer. Residues 427–439 (RYSGPDFWQLRVS) are Lumenal-facing. Residues 440–460 (SLSVLLVSIILGVSTFASSFI) traverse the membrane as a helical segment. The Cytoplasmic segment spans residues 461–469 (EEEHQLWWW). Residues 470-490 (IVTAFSAVPLFVYRLNVLIIV) form a helical membrane-spanning segment. Residues 491-533 (RWFIMMACVRSIKFWNNSGQKFIYSNVMSNLLNQNPSWKWCLN) are Lumenal-facing. Asparagine 506 is a glycosylation site (N-linked (GlcNAc...) asparagine). Residues 534–554 (MLTFLVLIMASAGFQVLHFIV) traverse the membrane as a helical segment. Topologically, residues 555 to 598 (TTILVGLCFTYKISWEIVNGNQAEIPLFMHDLLAKIDFAPTESN) are cytoplasmic. A helical transmembrane segment spans residues 599 to 619 (LIVLARVFFQAWAIVVISRLV). Residues 620-651 (LTKLKVLNKNYLIKDMKVYITILLMFQTSSQN) are Lumenal-facing. Residues 652-672 (IGQFLVFQILESQIFYFFQNI) traverse the membrane as a helical segment. At 673-682 (PTASLTSTSK) the chain is on the cytoplasmic side. A helical transmembrane segment spans residues 683–703 (IYFSNLVSLILQNFTFFQFGG). Residues 704–724 (TNSISTIDLGNAYHGVSSDYN) lie on the Lumenal side of the membrane. The chain crosses the membrane as a helical span at residues 725–745 (IYVVGILMSVANFAPAIYWSM). Over 746–768 (LPWSINYASIPAQVKLQTFIRSK) the chain is Cytoplasmic. The helical transmembrane segment at 769-789 (LPAFTYHCIFGTCLMTACVVL) threads the bilayer. The Lumenal portion of the chain corresponds to 790 to 805 (RFHLFIWSVFSPKLCY). Residues 806 to 826 (FLGWNFVMGLLNGWLPELALL) form a helical membrane-spanning segment. Residues 827 to 830 (CALD) are Cytoplasmic-facing.

The protein belongs to the PIGG/PIGN/PIGO family. PIGG subfamily. Post-translationally, N-glycosylated.

It localises to the endoplasmic reticulum membrane. It functions in the pathway glycolipid biosynthesis; glycosylphosphatidylinositol-anchor biosynthesis. Functionally, ethanolamine phosphate transferase involved in glycosylphosphatidylinositol-anchor biosynthesis. Transfers ethanolamine phosphate to the GPI second mannose. Although not essential, addition of ethanolamine phosphate to the second mannose plays an important role in cell separation via the GPI-based modification of daughter-specific proteins. This is GPI ethanolamine phosphate transferase 2 (LAS21) from Saccharomyces cerevisiae (strain ATCC 204508 / S288c) (Baker's yeast).